Consider the following 706-residue polypeptide: Protein kinase C theta type (706 aa).

A C2 domain is found at 1 to 107; the sequence is MSPFLRIGLS…KNNGKTEIWL (107 aa). The residue at position 90 (Tyr90) is a Phosphotyrosine; by LCK. Residues 159-209 form a Phorbol-ester/DAG-type 1 zinc finger; the sequence is CHEFTATFFPQPTFCSVCHEFVWGLNKQGYQCRQCNAAIHKKCIDKVIAKC. Thr219 is modified (phosphothreonine; by autocatalysis). Residues 231 to 281 form a Phorbol-ester/DAG-type 2 zinc finger; it reads PHRFKVYNYKSPTFCEHCGTLLWGLARQGLKCDACGMNVHHRCQTKVANLC. Ser348 is modified (phosphoserine). The 255-residue stretch at 380-634 folds into the Protein kinase domain; sequence FILHKMLGKG…RGDIRQHPLF (255 aa). Residues 386–394 and Lys409 each bind ATP; that span reads LGKGSFGKV. The Proton acceptor role is filled by Asp504. The residue at position 538 (Thr538) is a Phosphothreonine; by PDPK1. The AGC-kinase C-terminal domain occupies 635-706; the sequence is REINWEELER…MNPGMERLIS (72 aa). Ser676, Ser685, and Ser695 each carry phosphoserine.

The protein belongs to the protein kinase superfamily. AGC Ser/Thr protein kinase family. PKC subfamily. As to quaternary structure, part of a lipid raft complex composed at least of BCL10, CARD11, MALT1 and IKBKB. Interacts with GLRX3 (via N-terminus). Interacts with ECT2. Interacts with CCDC88A/GIV; the interaction leads to phosphorylation of CCDC88A and inhibition of its guanine nucleotide exchange factor activity. Interacts with PRKCH upstream open reading frame 2; the interaction leads to inhibition of kinase activity. Interacts with CD28. Mg(2+) serves as cofactor. In terms of processing, autophosphorylation at Thr-219 is required for targeting to the TCR and cellular function of PRKCQ upon antigen receptor ligation. Following TCR stimulation, phosphorylated at Tyr-90 and Ser-685. Expressed in skeletal muscle, T-cells, megakaryoblastic cells and platelets.

It is found in the cytoplasm. The protein resides in the cell membrane. It carries out the reaction L-seryl-[protein] + ATP = O-phospho-L-seryl-[protein] + ADP + H(+). It catalyses the reaction L-threonyl-[protein] + ATP = O-phospho-L-threonyl-[protein] + ADP + H(+). Its activity is regulated as follows. Novel PKCs (PRKCD, PRKCE, PRKCH and PRKCQ) are calcium-insensitive, but activated by diacylglycerol (DAG) and phosphatidylserine. Three specific sites; Thr-538 (activation loop of the kinase domain), Ser-676 (turn motif) and Ser-695 (hydrophobic region), need to be phosphorylated for its full activation. Inhibited by PRKCH upstream open reading frame 2. Functionally, calcium-independent, phospholipid- and diacylglycerol (DAG)-dependent serine/threonine-protein kinase that mediates non-redundant functions in T-cell receptor (TCR) signaling, including T-cells activation, proliferation, differentiation and survival, by mediating activation of multiple transcription factors such as NF-kappa-B, JUN, NFATC1 and NFATC2. In TCR-CD3/CD28-co-stimulated T-cells, is required for the activation of NF-kappa-B and JUN, which in turn are essential for IL2 production, and participates in the calcium-dependent NFATC1 and NFATC2 transactivation. Mediates the activation of the canonical NF-kappa-B pathway (NFKB1) by direct phosphorylation of CARD11 on several serine residues, inducing CARD11 association with lipid rafts and recruitment of the BCL10-MALT1 complex, which then activates IKK complex, resulting in nuclear translocation and activation of NFKB1. May also play an indirect role in activation of the non-canonical NF-kappa-B (NFKB2) pathway. In the signaling pathway leading to JUN activation, acts by phosphorylating the mediator STK39/SPAK and may not act through MAP kinases signaling. Plays a critical role in TCR/CD28-induced NFATC1 and NFATC2 transactivation by participating in the regulation of reduced inositol 1,4,5-trisphosphate generation and intracellular calcium mobilization. After costimulation of T-cells through CD28 can phosphorylate CBLB and is required for the ubiquitination and subsequent degradation of CBLB, which is a prerequisite for the activation of TCR. During T-cells differentiation, plays an important role in the development of T-helper 2 (Th2) cells following immune and inflammatory responses, and, in the development of inflammatory autoimmune diseases, is necessary for the activation of IL17-producing Th17 cells. May play a minor role in Th1 response. Upon TCR stimulation, mediates T-cell protective survival signal by phosphorylating BAD, thus protecting T-cells from BAD-induced apoptosis, and by up-regulating BCL-X(L)/BCL2L1 levels through NF-kappa-B and JUN pathways. In platelets, regulates signal transduction downstream of the ITGA2B, CD36/GP4, F2R/PAR1 and F2RL3/PAR4 receptors, playing a positive role in 'outside-in' signaling and granule secretion signal transduction. May relay signals from the activated ITGA2B receptor by regulating the uncoupling of WASP and WIPF1, thereby permitting the regulation of actin filament nucleation and branching activity of the Arp2/3 complex. May mediate inhibitory effects of free fatty acids on insulin signaling by phosphorylating IRS1, which in turn blocks IRS1 tyrosine phosphorylation and downstream activation of the PI3K/AKT pathway. Phosphorylates MSN (moesin) in the presence of phosphatidylglycerol or phosphatidylinositol. Phosphorylates PDPK1 at 'Ser-504' and 'Ser-532' and negatively regulates its ability to phosphorylate PKB/AKT1. Phosphorylates CCDC88A/GIV and inhibits its guanine nucleotide exchange factor activity. Phosphorylates and activates LRRK1, which phosphorylates RAB proteins involved in intracellular trafficking. The sequence is that of Protein kinase C theta type (PRKCQ) from Homo sapiens (Human).